The following is a 263-amino-acid chain: CRISPR-associated protein Cas5 2 (263 aa).

Belongs to the CRISPR-associated protein Cas5 family. Subtype I-A/Apern subfamily. Part of the aCascade ribonucleoprotein complex, minimally composed of Csa2 and Cas5a, which binds crRNA. Other possible components of aCascade in strain P1 are Cas6b (SSO1437) and Csa5 (SSO1443), while SSO1399, Cas5b (SSO1400) and SSO1401 have sometimes been seen weakly associated. Csa2 is probably the major RNA-binding subunit. The Csa2-Cas5a-crRNA complex also binds target DNA homologous to crRNA, probably forming an R-loop. Purified aCascade forms a filament about 6 nm in width.

CRISPR (clustered regularly interspaced short palindromic repeat) is an adaptive immune system that provides protection against mobile genetic elements (viruses, transposable elements and conjugative plasmids). CRISPR clusters contain spacers, sequences complementary to antecedent mobile elements, and target invading nucleic acids. CRISPR clusters are transcribed and processed into CRISPR RNA (crRNA). The chain is CRISPR-associated protein Cas5 2 (cas5b) from Saccharolobus solfataricus (strain ATCC 35092 / DSM 1617 / JCM 11322 / P2) (Sulfolobus solfataricus).